We begin with the raw amino-acid sequence, 66 residues long: UPF0434 protein RPC_0266 (66 aa).

The protein belongs to the UPF0434 family.

The protein is UPF0434 protein RPC_0266 of Rhodopseudomonas palustris (strain BisB18).